A 403-amino-acid polypeptide reads, in one-letter code: Vitamin D(3) 25-hydroxylase (403 aa).

Residue Cys347 coordinates heme.

This sequence belongs to the cytochrome P450 family. The cofactor is heme.

It is found in the cytoplasm. It catalyses the reaction 5beta-cholestane-3alpha,7alpha,12alpha-triol + 6 reduced [adrenodoxin] + 3 O2 + 5 H(+) = (25R)-3alpha,7alpha,12alpha-trihydroxy-5beta-cholestan-26-oate + 6 oxidized [adrenodoxin] + 4 H2O. Its activity is regulated as follows. Activated by partially methylated beta-cyclodextrin. Functionally, hydroxylates vitamin D(3) into 25-hydroxyvitamin D(3) and 1-alpha,25-dihydroxyvitamin D(3), its physiologically active forms. It first hydroxylates the C-25 position of vitamin D(3) to form 25-hydroxyvitamin D(3), then subsequently hydroxylates the C-1-alpha position to form 1-alpha,25-dihydroxyvitamin D(3). Also displays 25-hydroxylase activity on vitamin D(2) and 7-dehydrocholesterol. May play a role in the biosynthesis of steroid metabolic intermediates. The sequence is that of Vitamin D(3) 25-hydroxylase from Pseudonocardia autotrophica (Amycolata autotrophica).